A 268-amino-acid polypeptide reads, in one-letter code: Proenkephalin-A (268 aa).

The signal sequence occupies residues 1-24; that stretch reads MARFLRLCTWLLVLGSCLLATVQA. 3 cysteine pairs are disulfide-bonded: Cys-26–Cys-48, Cys-30–Cys-52, and Cys-33–Cys-65. Positions 162 to 185 are disordered; sequence GTGDNRAREGRHQESTDNDDNMSK. The segment covering 166–176 has biased composition (basic and acidic residues); it reads NRAREGRHQES. 2 consecutive propeptides follow at residues 197–208 and 218–228; these read SPQVEDEAKELQ and VGRPEWWMDYQ. Ser-252 is modified (phosphoserine).

The protein belongs to the opioid neuropeptide precursor family. In terms of processing, proenkephalin-A is cleaved by CTSL to generate Met-enkephalin. Post-translationally, processed and degraded by ACE. Probably cleaved by ACE. In terms of processing, processed by ACE to generate Met-enkephalin in the nucleus accumbens of the brain. Post-translationally, the N-terminal domain contains 6 conserved cysteines thought to be involved in disulfide bonding and/or processing.

It is found in the cytoplasmic vesicle. It localises to the secretory vesicle. Its subcellular location is the chromaffin granule lumen. The protein resides in the secreted. In terms of biological role, neuropeptide that competes with and mimic the effects of opiate drugs. They play a role in a number of physiologic functions, including pain perception and responses to stress. Met-enkephalin-Arg-Phe neuropeptide acts as a strong ligand of Mu-type opioid receptor OPRM1. Met-enkephalin-Arg-Phe-binding to OPRM1 in the nucleus accumbens of the brain increases activation of OPRM1, leading to long-term synaptic depression of glutamate release. Functionally, increases glutamate release in the striatum and decreases GABA concentration in the striatum. Its function is as follows. Increases glutamate release in the striatum. The chain is Proenkephalin-A (PENK) from Mesocricetus auratus (Golden hamster).